A 257-amino-acid polypeptide reads, in one-letter code: Type III pantothenate kinase (257 aa).

6-13 serves as a coordination point for ATP; it reads DVGNTNTV. Substrate is bound by residues Y102 and 109 to 112; that span reads GADR. The active-site Proton acceptor is the D111. D131 is a binding site for K(+). T134 is an ATP binding site. Substrate is bound at residue T186.

Belongs to the type III pantothenate kinase family. As to quaternary structure, homodimer. Requires NH4(+) as cofactor. The cofactor is K(+).

The protein localises to the cytoplasm. It carries out the reaction (R)-pantothenate + ATP = (R)-4'-phosphopantothenate + ADP + H(+). The protein operates within cofactor biosynthesis; coenzyme A biosynthesis; CoA from (R)-pantothenate: step 1/5. In terms of biological role, catalyzes the phosphorylation of pantothenate (Pan), the first step in CoA biosynthesis. The chain is Type III pantothenate kinase from Leptospira borgpetersenii serovar Hardjo-bovis (strain JB197).